The primary structure comprises 22 residues: Chlorate reductase subunit gamma (22 aa).

The interval 1–22 (EXSEQNPNILEIKPGDTVKVXT) is disordered.

Heterotrimer of alpha, beta and gamma subunits. Heme b serves as cofactor.

The protein localises to the cytoplasm. Its function is as follows. May transfer electrons to the iron-sulfur centers of the beta subunit of chlorate reductase. The sequence is that of Chlorate reductase subunit gamma from Stutzerimonas chloritidismutans (Pseudomonas chloritidismutans).